The sequence spans 341 residues: HTH-type transcriptional repressor PurR (341 aa).

One can recognise an HTH lacI-type domain in the interval 2-56 (ATIKDVAKHAGVSTTTVSHVINKTRFVAENTKAAVWAAIKELHYSPSAVARSLKV). Residues 4–23 (IKDVAKHAGVSTTTVSHVIN) constitute a DNA-binding region (H-T-H motif). Residues 48 to 56 (SAVARSLKV) mediate DNA binding. Residues Y73, R190, T192, F221, and D275 each contribute to the hypoxanthine site.

In terms of assembly, homodimer.

It functions in the pathway purine metabolism; purine nucleotide biosynthesis [regulation]. Functionally, is the main repressor of the genes involved in the de novo synthesis of purine nucleotides, regulating purB, purC, purEK, purF, purHD, purL, purMN and guaBA expression. PurR is allosterically activated to bind its cognate DNA by binding the purine corepressors, hypoxanthine or guanine, thereby effecting transcription repression. In Yersinia enterocolitica serotype O:8 / biotype 1B (strain NCTC 13174 / 8081), this protein is HTH-type transcriptional repressor PurR.